The following is a 273-amino-acid chain: Formamidopyrimidine-DNA glycosylase (273 aa).

Proline 2 serves as the catalytic Schiff-base intermediate with DNA. The Proton donor role is filled by glutamate 3. Lysine 58 (proton donor; for beta-elimination activity) is an active-site residue. The DNA site is built by histidine 91 and arginine 110. The FPG-type zinc-finger motif lies at 238–272; it reads QVYGKTGQPCPRCASMIVKIKLGGRGTHLCPHCQK. The Proton donor; for delta-elimination activity role is filled by arginine 262.

Belongs to the FPG family. As to quaternary structure, monomer. The cofactor is Zn(2+).

It catalyses the reaction Hydrolysis of DNA containing ring-opened 7-methylguanine residues, releasing 2,6-diamino-4-hydroxy-5-(N-methyl)formamidopyrimidine.. It carries out the reaction 2'-deoxyribonucleotide-(2'-deoxyribose 5'-phosphate)-2'-deoxyribonucleotide-DNA = a 3'-end 2'-deoxyribonucleotide-(2,3-dehydro-2,3-deoxyribose 5'-phosphate)-DNA + a 5'-end 5'-phospho-2'-deoxyribonucleoside-DNA + H(+). Its function is as follows. Involved in base excision repair of DNA damaged by oxidation or by mutagenic agents. Acts as a DNA glycosylase that recognizes and removes damaged bases. Has a preference for oxidized purines, such as 7,8-dihydro-8-oxoguanine (8-oxoG). Has AP (apurinic/apyrimidinic) lyase activity and introduces nicks in the DNA strand. Cleaves the DNA backbone by beta-delta elimination to generate a single-strand break at the site of the removed base with both 3'- and 5'-phosphates. In Streptococcus thermophilus (strain ATCC BAA-250 / LMG 18311), this protein is Formamidopyrimidine-DNA glycosylase.